The primary structure comprises 261 residues: tRNA U34 carboxymethyltransferase (261 aa).

Carboxy-S-adenosyl-L-methionine is bound by residues K25, W39, K44, G63, V114–E115, Y135, and R250.

The protein belongs to the class I-like SAM-binding methyltransferase superfamily. CmoB family. In terms of assembly, homotetramer.

It carries out the reaction carboxy-S-adenosyl-L-methionine + 5-hydroxyuridine(34) in tRNA = 5-carboxymethoxyuridine(34) in tRNA + S-adenosyl-L-homocysteine + H(+). In terms of biological role, catalyzes carboxymethyl transfer from carboxy-S-adenosyl-L-methionine (Cx-SAM) to 5-hydroxyuridine (ho5U) to form 5-carboxymethoxyuridine (cmo5U) at position 34 in tRNAs. The sequence is that of tRNA U34 carboxymethyltransferase from Helicobacter pylori (strain HPAG1).